Reading from the N-terminus, the 652-residue chain is ATP-dependent zinc metalloprotease FtsH 2 (652 aa).

The Cytoplasmic segment spans residues 1 to 6; sequence MNKYRR. Residues 7 to 27 form a helical membrane-spanning segment; sequence GLALGALALAVFILIGVGISM. Residues 28 to 108 are Extracellular-facing; the sequence is RATPQPVNLT…PAGNGAISAD (81 aa). The helical transmembrane segment at 109 to 129 threads the bilayer; that stretch reads LMLLLRILTIVAVGVVIFVLF. Residues 130–652 are Cytoplasmic-facing; sequence RRFGPSSIGT…RAAKPQIDRT (523 aa). An ATP-binding site is contributed by 200-207; the sequence is GPPGTGKT. H420 lines the Zn(2+) pocket. The active site involves E421. Zn(2+)-binding residues include H424 and D496.

It in the central section; belongs to the AAA ATPase family. The protein in the C-terminal section; belongs to the peptidase M41 family. Homohexamer. Zn(2+) is required as a cofactor.

It localises to the cell membrane. Functionally, acts as a processive, ATP-dependent zinc metallopeptidase for both cytoplasmic and membrane proteins. Plays a role in the quality control of integral membrane proteins. The polypeptide is ATP-dependent zinc metalloprotease FtsH 2 (Sphaerobacter thermophilus (strain ATCC 49802 / DSM 20745 / KCCM 41009 / NCIMB 13125 / S 6022)).